Here is a 185-residue protein sequence, read N- to C-terminus: NADH-quinone oxidoreductase subunit B (185 aa).

Residues Cys64, Cys65, Cys129, and Cys159 each coordinate [4Fe-4S] cluster.

Belongs to the complex I 20 kDa subunit family. As to quaternary structure, NDH-1 is composed of 14 different subunits. Subunits NuoB, C, D, E, F, and G constitute the peripheral sector of the complex. Requires [4Fe-4S] cluster as cofactor.

It localises to the cell inner membrane. It carries out the reaction a quinone + NADH + 5 H(+)(in) = a quinol + NAD(+) + 4 H(+)(out). Its function is as follows. NDH-1 shuttles electrons from NADH, via FMN and iron-sulfur (Fe-S) centers, to quinones in the respiratory chain. Couples the redox reaction to proton translocation (for every two electrons transferred, four hydrogen ions are translocated across the cytoplasmic membrane), and thus conserves the redox energy in a proton gradient. The protein is NADH-quinone oxidoreductase subunit B of Rhodospirillum rubrum (strain ATCC 11170 / ATH 1.1.1 / DSM 467 / LMG 4362 / NCIMB 8255 / S1).